The primary structure comprises 504 residues: Catalase (504 aa).

The segment at 1 to 25 (MSKQDGKLTGLFGAPVSDRENSMTA) is disordered. Residues H56 and N129 contribute to the active site. Y339 serves as a coordination point for heme.

The protein belongs to the catalase family. As to quaternary structure, homodimer. It depends on heme as a cofactor.

The enzyme catalyses 2 H2O2 = O2 + 2 H2O. Functionally, decomposes hydrogen peroxide into water and oxygen; serves to protect cells from the toxic effects of hydrogen peroxide. This is Catalase (katA) from Staphylococcus epidermidis (strain ATCC 35984 / DSM 28319 / BCRC 17069 / CCUG 31568 / BM 3577 / RP62A).